A 932-amino-acid polypeptide reads, in one-letter code: Protocadherin gamma-A3 (932 aa).

The first 29 residues, 1–29, serve as a signal peptide directing secretion; the sequence is MTNCLSFRNGRGLALLCALLGTLCETGSG. 6 Cadherin domains span residues 30 to 133, 134 to 242, 243 to 347, 348 to 452, 453 to 562, and 570 to 682; these read QIRY…APNF, PTEE…PPMF, TQPE…APEI, TITS…PPTF, PHLS…APEI, and DGST…EPSA. The Extracellular segment spans residues 30 to 692; that stretch reads QIRYSVSEEL…KPNDSDLTLY (663 aa). 3 N-linked (GlcNAc...) asparagine glycosylation sites follow: Asn-265, Asn-419, and Asn-545. Asn-685 carries an N-linked (GlcNAc...) asparagine glycan. Residues 693-713 form a helical membrane-spanning segment; it reads LVVAVAAVSCVFLALVIVLLA. At 714–932 the chain is on the cytoplasmic side; it reads HRLRRWHKSR…KKKSGKKEKK (219 aa). Disordered stretches follow at residues 806-841 and 902-932; these read LLQQ…WPNN and ATLT…KEKK. Basic residues predominate over residues 922-932; it reads NKKKSGKKEKK.

The protein localises to the cell membrane. In terms of biological role, potential calcium-dependent cell-adhesion protein. May be involved in the establishment and maintenance of specific neuronal connections in the brain. The polypeptide is Protocadherin gamma-A3 (PCDHGA3) (Pan troglodytes (Chimpanzee)).